The sequence spans 426 residues: MKIKSISGNTSVSLKRSIDAGTEEQRKAVRGIIEEVKKNGNAAVSAFTRQFDGADVAGFRVSEEEIKEAYSALEERDLEIIQAAIFNIKEYHERQLATSWFYHRKDGTMLGQKITPLDSAGVYVPGGTAAYPSSVLMNVIPALVAGVDRIVLASPPGKDGKLSAGVLAAAAELGVTEIYKMGGAQAIAALAYGTETITPVDKITGPGNIYVALAKREVFGQVDIDMIAGPSEIAILADSTANYREIAADLLSQAEHDAMASSILVTDSETLAESVLKEVYRQLEHLPRKEIARQSIDNYGLIYVTETMNEAVSVINELAPEHLEILTVQPDALLGQIKHAGAIFLGRYSSEPVGDYFAGPNHVLPTNGTARFSSPLNVTDFQKRSSIISYSREAFRANAEKIAAFARLEGLEAHARAIESRNREED.

Positions 123, 185, and 208 each coordinate NAD(+). Residues Ser231, Gln253, and His256 each coordinate substrate. The Zn(2+) site is built by Gln253 and His256. Active-site proton acceptor residues include Glu321 and His322. Residues His322, Asp355, Glu409, and His414 each coordinate substrate. Position 355 (Asp355) interacts with Zn(2+). Residue His414 coordinates Zn(2+).

The protein belongs to the histidinol dehydrogenase family. Zn(2+) serves as cofactor.

The enzyme catalyses L-histidinol + 2 NAD(+) + H2O = L-histidine + 2 NADH + 3 H(+). The protein operates within amino-acid biosynthesis; L-histidine biosynthesis; L-histidine from 5-phospho-alpha-D-ribose 1-diphosphate: step 9/9. In terms of biological role, catalyzes the sequential NAD-dependent oxidations of L-histidinol to L-histidinaldehyde and then to L-histidine. The sequence is that of Histidinol dehydrogenase from Bacillus licheniformis (strain ATCC 14580 / DSM 13 / JCM 2505 / CCUG 7422 / NBRC 12200 / NCIMB 9375 / NCTC 10341 / NRRL NRS-1264 / Gibson 46).